Consider the following 104-residue polypeptide: Putative heat shock protein PS1 (104 aa).

Residues N11 and N18 are each glycosylated (N-linked (GlcNAc...) asparagine). N18 contributes to the ATP binding site.

This sequence belongs to the heat shock protein 90 family. As to quaternary structure, homodimer.

It localises to the cytoplasm. Functionally, putative molecular chaperone that may promote the maturation, structural maintenance and proper regulation of specific target proteins. This chain is Putative heat shock protein PS1, found in Pinus strobus (Eastern white pine).